We begin with the raw amino-acid sequence, 402 residues long: MTNPKLVLAYSGGLDTSVAIKWLQERGYDVIACCLDLGEGKDLDFVKEKALKVGAIKSYVIDVKEEFADEYALIALQAHALYEGKYPLVSALSRPLIAKKLVEIAELEGAVAVAHGCTGKGNDQVRFEVSIKALNPNLEVIAPVREWSWSREEEIEYAKKHGIPIPVDLDSPFSIDQNLWGRSNECGILEDPWAAPPEEAYELTAALENTPDVPEIIEIGFEQGVPKTLNGKPYSLASLILELNAIAGKHGVGRIDHVENRLVGIKSREVYECPGAMTLIKAHKELEDLTLVKEVAHFKPIIEQKLAEVIYNGLWFSPIKDALVAFLKETQKNVTGVVRVKLFKGHAIIEGRKSEFSLYDEKLATYTADDQFDHQAAVGFISLYGLPTKVYSIVNNQKKVNV.

Position 9–17 (9–17 (AYSGGLDTS)) interacts with ATP. Tyr86 lines the L-citrulline pocket. Gly116 lines the ATP pocket. 3 residues coordinate L-aspartate: Thr118, Asn122, and Asp123. L-citrulline is bound at residue Asn122. L-citrulline is bound by residues Arg126, Ser174, Ser183, Glu259, and Tyr271.

It belongs to the argininosuccinate synthase family. Type 1 subfamily. As to quaternary structure, homotetramer.

It localises to the cytoplasm. The enzyme catalyses L-citrulline + L-aspartate + ATP = 2-(N(omega)-L-arginino)succinate + AMP + diphosphate + H(+). Its pathway is amino-acid biosynthesis; L-arginine biosynthesis; L-arginine from L-ornithine and carbamoyl phosphate: step 2/3. The sequence is that of Argininosuccinate synthase from Geobacillus sp. (strain WCH70).